Here is a 65-residue protein sequence, read N- to C-terminus: Small ribosomal subunit protein bS21 (65 aa).

This sequence belongs to the bacterial ribosomal protein bS21 family.

The polypeptide is Small ribosomal subunit protein bS21 (Aster yellows phytoplasma).